A 211-amino-acid polypeptide reads, in one-letter code: Ribosomal RNA small subunit methyltransferase G (211 aa).

Residues Gly-74, Leu-79, 125-126 (AE), and Arg-140 each bind S-adenosyl-L-methionine.

Belongs to the methyltransferase superfamily. RNA methyltransferase RsmG family.

Its subcellular location is the cytoplasm. Its function is as follows. Specifically methylates the N7 position of guanine in position 518 of 16S rRNA. The chain is Ribosomal RNA small subunit methyltransferase G from Clavibacter michiganensis subsp. michiganensis (strain NCPPB 382).